The sequence spans 680 residues: Protein terminal ear1 homolog (680 aa).

The region spanning 223–295 (SLVVLNSLPA…RRLVVEYTRP (73 aa)) is the RRM domain. 2 disordered regions span residues 294–415 (RPSL…SWRG) and 593–680 (TEPV…GYTD). Composition is skewed to low complexity over residues 328–340 (PSQS…SGSG) and 379–403 (SAAA…KQSQ). The segment covering 404-413 (KGGGGRGGSW) has biased composition (gly residues). 2 stretches are compositionally biased toward low complexity: residues 602 to 621 (SPAP…CAAS) and 634 to 648 (SSSG…SSNA). Basic and acidic residues predominate over residues 656–666 (HGETGGDRGDD).

Highly expressed in shoot apex and inflorescence apex, at intermediate levels in roots and at low levels in leaf blade and leaf sheath.

Functionally, probable RNA-binding protein. Involved in the regular timing (plastochron) of lateral organs formation. May regulate the rate of leaf initiation and the duration of vegetative phase. Seems to be redundant to the function of PLASTOCHRON1, but to act in an independent pathway. In Oryza sativa subsp. indica (Rice), this protein is Protein terminal ear1 homolog (PLA2).